The sequence spans 918 residues: von Willebrand factor A domain-containing protein DDB_G0292016 (918 aa).

The VIT domain occupies 44 to 172 (KRCGLYSLKN…NVKVRVVISS (129 aa)). Positions 299-467 (EFIFLIDCSG…NMEKQVMKLL (169 aa)) constitute a VWFA domain. Residues 625 to 814 (VDIMNQSPPI…PSAPSQQKSV (190 aa)) are disordered. A compositionally biased stretch (low complexity) spans 650–690 (ASGALSSSILSRKRSSSPSTATKRSSSSSFSSSYLSLSSSS). Acidic residues predominate over residues 716 to 746 (YESDGGDQSSEQDEEEEDDCDDFHEDLDEDL). Residues 752–774 (DVDKKECEKECKKKDSSKVDLKV) show a composition bias toward basic and acidic residues. A compositionally biased stretch (low complexity) spans 777–814 (SKVPLPSRSPSVSKPTTTSLLSPSPKSAPSAPSQQKSV).

This chain is von Willebrand factor A domain-containing protein DDB_G0292016, found in Dictyostelium discoideum (Social amoeba).